The following is a 337-amino-acid chain: Holliday junction branch migration complex subunit RuvB (337 aa).

Residues 4–184 (ADRLIEPIAS…FGIVQRLEFY (181 aa)) are large ATPase domain (RuvB-L). Residues Ile23, Arg24, Gly65, Lys68, Thr69, Thr70, 131-133 (EDY), Arg174, Tyr184, and Arg221 contribute to the ATP site. Thr69 lines the Mg(2+) pocket. Residues 185-255 (NVADLSTIVS…TAAAALDMLE (71 aa)) form a small ATPAse domain (RuvB-S) region. The head domain (RuvB-H) stretch occupies residues 258 to 337 (SEGFDIMDRK…FGITKDQTKD (80 aa)). DNA-binding residues include Arg294, Arg313, and Arg318.

This sequence belongs to the RuvB family. In terms of assembly, homohexamer. Forms an RuvA(8)-RuvB(12)-Holliday junction (HJ) complex. HJ DNA is sandwiched between 2 RuvA tetramers; dsDNA enters through RuvA and exits via RuvB. An RuvB hexamer assembles on each DNA strand where it exits the tetramer. Each RuvB hexamer is contacted by two RuvA subunits (via domain III) on 2 adjacent RuvB subunits; this complex drives branch migration. In the full resolvosome a probable DNA-RuvA(4)-RuvB(12)-RuvC(2) complex forms which resolves the HJ.

The protein localises to the cytoplasm. It carries out the reaction ATP + H2O = ADP + phosphate + H(+). Functionally, the RuvA-RuvB-RuvC complex processes Holliday junction (HJ) DNA during genetic recombination and DNA repair, while the RuvA-RuvB complex plays an important role in the rescue of blocked DNA replication forks via replication fork reversal (RFR). RuvA specifically binds to HJ cruciform DNA, conferring on it an open structure. The RuvB hexamer acts as an ATP-dependent pump, pulling dsDNA into and through the RuvAB complex. RuvB forms 2 homohexamers on either side of HJ DNA bound by 1 or 2 RuvA tetramers; 4 subunits per hexamer contact DNA at a time. Coordinated motions by a converter formed by DNA-disengaged RuvB subunits stimulates ATP hydrolysis and nucleotide exchange. Immobilization of the converter enables RuvB to convert the ATP-contained energy into a lever motion, pulling 2 nucleotides of DNA out of the RuvA tetramer per ATP hydrolyzed, thus driving DNA branch migration. The RuvB motors rotate together with the DNA substrate, which together with the progressing nucleotide cycle form the mechanistic basis for DNA recombination by continuous HJ branch migration. Branch migration allows RuvC to scan DNA until it finds its consensus sequence, where it cleaves and resolves cruciform DNA. The protein is Holliday junction branch migration complex subunit RuvB of Colwellia psychrerythraea (strain 34H / ATCC BAA-681) (Vibrio psychroerythus).